A 273-amino-acid polypeptide reads, in one-letter code: DNA repair protein RecO (273 aa).

Belongs to the RecO family.

In terms of biological role, involved in DNA repair and RecF pathway recombination. The chain is DNA repair protein RecO from Mycolicibacterium gilvum (strain PYR-GCK) (Mycobacterium gilvum (strain PYR-GCK)).